A 617-amino-acid chain; its full sequence is Tetratricopeptide repeat protein 39B (617 aa).

TPR repeat units follow at residues 328 to 361 and 561 to 594; these read SLIL…QEEW and PFTL…YKDY.

The protein belongs to the TTC39 family.

Functionally, regulates high density lipoprotein (HDL) cholesterol metabolism by promoting the ubiquitination and degradation of the oxysterols receptors LXR (NR1H2 and NR1H3). In Rattus norvegicus (Rat), this protein is Tetratricopeptide repeat protein 39B (Ttc39b).